Here is a 2290-residue protein sequence, read N- to C-terminus: Autophagy-related protein 2 (2290 aa).

The Chorein N-terminal domain maps to tryptophan 10–phenylalanine 99. A required for epg-6 binding region spans residues aspartate 829–valine 1549. Disordered regions lie at residues isoleucine 1678–leucine 1727, aspartate 1805–glycine 1851, serine 1898–asparagine 1919, and glutamate 1967–lysine 2003. Residues lysine 1681–serine 1692 show a composition bias toward low complexity. The segment covering arginine 1714 to proline 1723 has biased composition (pro residues). Positions glutamine 1810–glutamine 1830 are enriched in low complexity. A coiled-coil region spans residues leucine 1972–arginine 2011. The segment covering glutamate 1988–glutamate 1999 has biased composition (acidic residues).

This sequence belongs to the ATG2 family. In terms of assembly, interacts with epg-6; the interaction is direct.

It is found in the preautophagosomal structure membrane. It localises to the lipid droplet. The protein resides in the endoplasmic reticulum membrane. Its subcellular location is the cytoplasm. It catalyses the reaction a 1,2-diacyl-sn-glycero-3-phospho-L-serine(in) = a 1,2-diacyl-sn-glycero-3-phospho-L-serine(out). The enzyme catalyses a 1,2-diacyl-sn-glycero-3-phosphoethanolamine(in) = a 1,2-diacyl-sn-glycero-3-phosphoethanolamine(out). In terms of biological role, lipid transfer protein involved in autophagosome assembly and in the distribution of atg-9 and atg-13 during the autophagy-mediated degradation of protein aggregates. Tethers the edge of the isolation membrane (IM) to the endoplasmic reticulum (ER) and mediates direct lipid transfer from ER to IM for IM expansion. Binds to the ER exit site (ERES), which is the membrane source for autophagosome formation, and extracts phospholipids from the membrane source to the IM for membrane expansion. Involved in autophagy-mediated degradation of ribosomal RNA and ribosomal proteins in lysosomes, which is essential for maintaining nucleotide homeostasis. The chain is Autophagy-related protein 2 from Caenorhabditis elegans.